Consider the following 303-residue polypeptide: Crk-like protein (303 aa).

Residues 14-102 (WYMGPVSRQE…LDTTTLIEPA (89 aa)) enclose the SH2 domain. Positions 123 to 183 (DNLEYVRTLY…PVPYVEKLVR (61 aa)) constitute an SH3 1 domain. Residues tyrosine 127 and tyrosine 207 each carry the phosphotyrosine modification. Positions 184-234 (SSPHGKHGNRNSNSYGIPEPAHAYAQPQTTTPLPAVSGSPGAAITPLPSTQ) are disordered. The SH3 2 domain occupies 235–296 (NGPVFAKAIQ…PFTHVKIFDP (62 aa)).

This sequence belongs to the CRK family. As to quaternary structure, interacts with tyrosine-phosphorylated EPOR and INPP5D/SHIP1. Interacts with DOCK2 and DOCK5 via its first SH3 domain. Interacts with phosphorylated CBLB and IRS4. Interacts with BCAR1/CAS and NEDD9/HEF1.

In terms of biological role, may mediate the transduction of intracellular signals. This Homo sapiens (Human) protein is Crk-like protein (CRKL).